The chain runs to 197 residues: dTTP/UTP pyrophosphatase (197 aa).

Aspartate 70 serves as the catalytic Proton acceptor.

The protein belongs to the Maf family. YhdE subfamily. A divalent metal cation serves as cofactor.

The protein localises to the cytoplasm. It carries out the reaction dTTP + H2O = dTMP + diphosphate + H(+). The catalysed reaction is UTP + H2O = UMP + diphosphate + H(+). Its function is as follows. Nucleoside triphosphate pyrophosphatase that hydrolyzes dTTP and UTP. May have a dual role in cell division arrest and in preventing the incorporation of modified nucleotides into cellular nucleic acids. The polypeptide is dTTP/UTP pyrophosphatase (yceF2) (Escherichia coli O6:K15:H31 (strain 536 / UPEC)).